A 173-amino-acid polypeptide reads, in one-letter code: Putative phosphoesterase GTNG_0743 (173 aa).

The active-site Proton donor is H34. 2 short sequence motifs (HXTX) span residues 34 to 37 (HITL) and 115 to 118 (HITI). The active-site Proton acceptor is H115.

Belongs to the 2H phosphoesterase superfamily. YjcG family.

The protein is Putative phosphoesterase GTNG_0743 of Geobacillus thermodenitrificans (strain NG80-2).